The primary structure comprises 207 residues: Small ribosomal subunit protein uS4 (207 aa).

The segment at 31-55 (KCKLDSKPGQHGRTSGARTSDYGTQ) is disordered. Positions 42–53 (GRTSGARTSDYG) are enriched in polar residues. The region spanning 97–160 (SRLDNVVYRM…KKQARIVEAL (64 aa)) is the S4 RNA-binding domain.

The protein belongs to the universal ribosomal protein uS4 family. In terms of assembly, part of the 30S ribosomal subunit. Contacts protein S5. The interaction surface between S4 and S5 is involved in control of translational fidelity.

Its function is as follows. One of the primary rRNA binding proteins, it binds directly to 16S rRNA where it nucleates assembly of the body of the 30S subunit. With S5 and S12 plays an important role in translational accuracy. The polypeptide is Small ribosomal subunit protein uS4 (Burkholderia ambifaria (strain MC40-6)).